A 33-amino-acid polypeptide reads, in one-letter code: Brevinin-2Rk (33 aa).

A disulfide bond links cysteine 27 and cysteine 33.

As to expression, expressed by the skin glands.

The protein localises to the secreted. Its function is as follows. Antimicrobial peptide. In Pelophylax ridibundus (Marsh frog), this protein is Brevinin-2Rk.